A 403-amino-acid polypeptide reads, in one-letter code: MAAMPGGPDLAGAGGAVAVAVDAMQVDDPPRASAEEKHGPTIMGGNDPVTGHIISTTIGGKNDEPKRTISYMAERVVGTGSFGVVFQAKCLETGETVAIKKVLQDKRYKNRELQIMRSMDHCNVISLKHCFFSTTSRDELFLNLVMEFVPESLYRVLKHYKDMKQRMPLIYVKLYMYQIFRGLAYIHTVPGVCHRDIKPQNILVDPLTHQVKVCDFGSAKMLIKGEANISYICSRYYRAPELIFGATEYTTSIDIWSAGCVLAELLLGQPLFPGESAVDQLVEIIKVLGTPTREEIRCMNPNYTEFKFPQIKACPWHKIFHKRMPPEAIDLVSRLLQYSPNLRCTALEACAHSFFDELREPHAKLPNGRPFPPLFNFKQELANTHPELVSRLLPEHAQRHSGF.

The 285-residue stretch at 71–355 (YMAERVVGTG…ALEACAHSFF (285 aa)) folds into the Protein kinase domain. Residues 77 to 85 (VGTGSFGVV) and Lys100 contribute to the ATP site. Asp196 (proton acceptor) is an active-site residue.

It belongs to the protein kinase superfamily. CMGC Ser/Thr protein kinase family. GSK-3 subfamily. Interacts with LIC.

The catalysed reaction is L-seryl-[protein] + ATP = O-phospho-L-seryl-[protein] + ADP + H(+). The enzyme catalyses L-threonyl-[protein] + ATP = O-phospho-L-threonyl-[protein] + ADP + H(+). In terms of biological role, probable serine-threonine kinase that may regulate brassinosteroid signaling. The chain is Shaggy-related protein kinase GSK4 from Oryza sativa subsp. japonica (Rice).